We begin with the raw amino-acid sequence, 213 residues long: 3,4-dihydroxy-2-butanone 4-phosphate synthase (213 aa).

D-ribulose 5-phosphate-binding positions include 37–38, D42, 150–154, and E174; these read RE and RPGHT. E38 is a Mg(2+) binding site. H153 contributes to the Mg(2+) binding site.

Belongs to the DHBP synthase family. In terms of assembly, homodimer. Mg(2+) serves as cofactor. Mn(2+) is required as a cofactor.

It carries out the reaction D-ribulose 5-phosphate = (2S)-2-hydroxy-3-oxobutyl phosphate + formate + H(+). It functions in the pathway cofactor biosynthesis; riboflavin biosynthesis; 2-hydroxy-3-oxobutyl phosphate from D-ribulose 5-phosphate: step 1/1. Its function is as follows. Catalyzes the conversion of D-ribulose 5-phosphate to formate and 3,4-dihydroxy-2-butanone 4-phosphate. This is 3,4-dihydroxy-2-butanone 4-phosphate synthase from Clostridium botulinum (strain ATCC 19397 / Type A).